The primary structure comprises 540 residues: Dynein axonemal assembly factor 3 homolog (540 aa).

The tract at residues 480–499 is disordered; that stretch reads AVTEAMPESTFKYDTDTDYG.

It belongs to the DNAAF3 family. In terms of tissue distribution, expressed in mechanosensory chordotonal (Ch) neurons, spermatocytes and spermatids (at protein level).

It localises to the cytoplasm. It is found in the dynein axonemal particle. Its function is as follows. Required for the assembly of axonemal inner and outer dynein arms. Involved in the cytoplasmic preassembly of dyneins into complexes before their transport into cilia. Essential for the development of axonemal dynein motors in the sensory cilium of mechanosensory chordotonal (Ch) neurons and sperm flagellum, and consequently, is required for the mechanotransduction process of hearing and sperm mobility. The sequence is that of Dynein axonemal assembly factor 3 homolog from Drosophila melanogaster (Fruit fly).